The chain runs to 609 residues: Proteasome-associated ATPase (609 aa).

Positions 1-27 are disordered; sequence MGSSERSEAFGTPRESDMSSGDEAELE. The stretch at 17–96 forms a coiled coil; the sequence is DMSSGDEAEL…LREEVDRLGQ (80 aa). 296–301 is an ATP binding site; sequence GCGKTL. The segment at 608 to 609 is docks into pockets in the proteasome alpha-ring; it reads YL.

The protein belongs to the AAA ATPase family. In terms of assembly, homohexamer. Assembles into a hexameric ring structure that caps the 20S proteasome core. Strongly interacts with the prokaryotic ubiquitin-like protein Pup through a hydrophobic interface; the interacting region of ARC lies in its N-terminal coiled-coil domain. There is one Pup binding site per ARC hexamer ring. Upon ATP-binding, the C-terminus of ARC interacts with the alpha-rings of the proteasome core, possibly by binding to the intersubunit pockets.

It participates in protein degradation; proteasomal Pup-dependent pathway. Its function is as follows. ATPase which is responsible for recognizing, binding, unfolding and translocation of pupylated proteins into the bacterial 20S proteasome core particle. May be essential for opening the gate of the 20S proteasome via an interaction with its C-terminus, thereby allowing substrate entry and access to the site of proteolysis. Thus, the C-termini of the proteasomal ATPase may function like a 'key in a lock' to induce gate opening and therefore regulate proteolysis. This chain is Proteasome-associated ATPase, found in Mycobacterium avium (strain 104).